Here is a 25-residue protein sequence, read N- to C-terminus: Chaperonin GroEL (25 aa).

This sequence belongs to the chaperonin (HSP60) family. In terms of assembly, forms a cylinder of 14 subunits composed of two heptameric rings stacked back-to-back. Interacts with the co-chaperonin GroES.

The protein localises to the cytoplasm. It catalyses the reaction ATP + H2O + a folded polypeptide = ADP + phosphate + an unfolded polypeptide.. Functionally, together with its co-chaperonin GroES, plays an essential role in assisting protein folding. The GroEL-GroES system forms a nano-cage that allows encapsulation of the non-native substrate proteins and provides a physical environment optimized to promote and accelerate protein folding. The polypeptide is Chaperonin GroEL (Delftia acidovorans (Pseudomonas acidovorans)).